Here is a 213-residue protein sequence, read N- to C-terminus: Proteasome subunit beta 1 (213 aa).

A propeptide spans 1-18 (removed in mature form; by autocatalysis); the sequence is MVFIAVFNGVFAMSSLPG. T19 (nucleophile) is an active-site residue.

The protein belongs to the peptidase T1B family. In terms of assembly, the 20S proteasome core is composed of 14 alpha and 14 beta subunits that assemble into four stacked heptameric rings, resulting in a barrel-shaped structure. The two inner rings, each composed of seven catalytic beta subunits, are sandwiched by two outer rings, each composed of seven alpha subunits. The catalytic chamber with the active sites is on the inside of the barrel. Has a gated structure, the ends of the cylinder being occluded by the N-termini of the alpha-subunits. Is capped at one or both ends by the proteasome regulatory ATPase, PAN.

It is found in the cytoplasm. It catalyses the reaction Cleavage of peptide bonds with very broad specificity.. The formation of the proteasomal ATPase PAN-20S proteasome complex, via the docking of the C-termini of PAN into the intersubunit pockets in the alpha-rings, triggers opening of the gate for substrate entry. Interconversion between the open-gate and close-gate conformations leads to a dynamic regulation of the 20S proteasome proteolysis activity. In terms of biological role, component of the proteasome core, a large protease complex with broad specificity involved in protein degradation. The chain is Proteasome subunit beta 1 from Staphylothermus marinus (strain ATCC 43588 / DSM 3639 / JCM 9404 / F1).